The following is a 417-amino-acid chain: Histidine--tRNA ligase (417 aa).

The protein belongs to the class-II aminoacyl-tRNA synthetase family. Homodimer.

Its subcellular location is the cytoplasm. It catalyses the reaction tRNA(His) + L-histidine + ATP = L-histidyl-tRNA(His) + AMP + diphosphate + H(+). The sequence is that of Histidine--tRNA ligase from Oleidesulfovibrio alaskensis (strain ATCC BAA-1058 / DSM 17464 / G20) (Desulfovibrio alaskensis).